We begin with the raw amino-acid sequence, 657 residues long: tRNA uridine 5-carboxymethylaminomethyl modification enzyme MnmG (657 aa).

Residue 13-18 (GGGHAG) coordinates FAD. Position 281–295 (281–295 (GPRYCPSVEDKINRF)) interacts with NAD(+).

Belongs to the MnmG family. Homodimer. Heterotetramer of two MnmE and two MnmG subunits. FAD is required as a cofactor.

The protein resides in the cytoplasm. Functionally, NAD-binding protein involved in the addition of a carboxymethylaminomethyl (cmnm) group at the wobble position (U34) of certain tRNAs, forming tRNA-cmnm(5)s(2)U34. The polypeptide is tRNA uridine 5-carboxymethylaminomethyl modification enzyme MnmG (Acidovorax ebreus (strain TPSY) (Diaphorobacter sp. (strain TPSY))).